Consider the following 462-residue polypeptide: Metal cation symporter ZIP8 (462 aa).

An N-terminal signal peptide occupies residues 1–19 (MAPGRAVAGLLLLAATGLG). Topologically, residues 20–132 (RPSEGPELAF…PSFSEVWGYG (113 aa)) are extracellular. Residues N40, N88, and N96 are each glycosylated (N-linked (GlcNAc...) asparagine). The chain crosses the membrane as a helical span at residues 133–153 (FLSVTIINLASLLGLILTPLI). The Cytoplasmic segment spans residues 154–160 (KKSYFPK). Residues 161–181 (ILTYFVGLAIGTLFSNAIFQL) traverse the membrane as a helical segment. Residues 182–191 (IPEAFGFNPK) lie on the Extracellular side of the membrane. The chain crosses the membrane as a helical span at residues 192-212 (IDNYVEKAVAVFGGFYMLFFV). The Cytoplasmic segment spans residues 213 to 367 (ERTLKMLLKT…LNAGMSTRQA (155 aa)). An XEXPHE-motif motif is present at residues 345–350 (EEFPHE). A helical membrane pass occupies residues 368–388 (LLFNFLSACSCYVGLAFGILV). Residues 389 to 390 (GN) are Extracellular-facing. The chain crosses the membrane as a helical span at residues 391 to 411 (NFAPNIIFALAGGMFLYISLA). At 412–431 (DMFPEMNDMLREKVTGRQTD) the chain is on the cytoplasmic side. A helical transmembrane segment spans residues 432 to 452 (FTFFMIQNAGMLTGFTAILLI). Residues 453-462 (TLYAGDIELQ) lie on the Extracellular side of the membrane.

This sequence belongs to the ZIP transporter (TC 2.A.5) family. As to quaternary structure, homodimer. Post-translationally, N-glycosylated. N-glycosylation is not required for proper iron and zinc transport.

The protein localises to the cell membrane. Its subcellular location is the lysosome membrane. It is found in the apical cell membrane. It localises to the basolateral cell membrane. The catalysed reaction is Zn(2+)(out) + 2 hydrogencarbonate(out) = Zn(2+)(in) + 2 hydrogencarbonate(in). It catalyses the reaction selenite(out) + Zn(2+)(out) + hydrogencarbonate(out) = selenite(in) + Zn(2+)(in) + hydrogencarbonate(in). The enzyme catalyses Mn(2+)(out) + 2 hydrogencarbonate(out) = Mn(2+)(in) + 2 hydrogencarbonate(in). It carries out the reaction Fe(2+)(out) + 2 hydrogencarbonate(out) = Fe(2+)(in) + 2 hydrogencarbonate(in). The catalysed reaction is Cd(2+)(out) + 2 hydrogencarbonate(out) = Cd(2+)(in) + 2 hydrogencarbonate(in). It catalyses the reaction Co(2+)(out) + 2 hydrogencarbonate(out) = Co(2+)(in) + 2 hydrogencarbonate(in). In terms of biological role, electroneutral divalent metal cation:bicarbonate symporter of the plasma membrane mediating the cellular uptake of zinc and manganese, two divalent metal cations important for development, tissue homeostasis and immunity. Transports an electroneutral complex composed of a divalent metal cation and two bicarbonate anions or alternatively a bicarbonate and a selenite anion. Thereby, it also contributes to the cellular uptake of selenium, an essential trace metal and micronutrient. Also imports cadmium a non-essential metal which is cytotoxic and carcinogenic. May also transport iron and cobalt through membranes. Through zinc import, indirectly regulates the metal-dependent transcription factor MTF1 and the expression of some metalloproteases involved in cartilage catabolism and also probably heart development. Also indirectly regulates the expression of proteins involved in cell morphology and cytoskeleton organization. Indirectly controls innate immune function and inflammatory response by regulating zinc cellular uptake which in turn modulates the expression of genes specific of these processes. Protects, for instance, cells from injury and death at the onset of inflammation. By regulating zinc influx into monocytes also directly modulates their adhesion to endothelial cells and arteries. Reclaims manganese from the bile at the apical membrane of hepatocytes, thereby regulating the activity of the manganese-dependent enzymes through the systemic levels of the nutrient. Also participates in manganese reabsorption in the proximal tubule of the kidney. By mediating the extracellular uptake of manganese by cells of the blood-brain barrier, may also play a role in the transport of the micronutrient to the brain. With manganese cellular uptake also participates in mitochondrial proper function. Finally, also probably functions intracellularly, translocating zinc from lysosome to cytosol to indirectly enhance the expression of specific genes during TCR-mediated T cell activation. The protein is Metal cation symporter ZIP8 of Rattus norvegicus (Rat).